Consider the following 452-residue polypeptide: Rhodopsin (452 aa).

Residues 1–33 (MGRDIPDNETWWYNPYMDIHPHWKQFDQVPAAV) lie on the Extracellular side of the membrane. Asn8 carries N-linked (GlcNAc...) asparagine glycosylation. Residues 34-58 (YYSLGIFIAICGIIGCVGNGVVIYL) traverse the membrane as a helical segment. The Cytoplasmic portion of the chain corresponds to 59-70 (FTKTKSLQTPAN). A helical transmembrane segment spans residues 71–97 (MFIINLAFSDFTFSLVNGFPLMTISCF). The Extracellular portion of the chain corresponds to 98-109 (MKYWVFGNAACK). An intrachain disulfide couples Cys108 to Cys186. A helical transmembrane segment spans residues 110-131 (VYGLIGGIFGLMSIMTMTMISI). The short motif at 132–134 (DRY) is the 'Ionic lock' involved in activated form stabilization element. Residues 132–151 (DRYNVIGRPMSASKKMSHRK) are Cytoplasmic-facing. Residues 152-172 (AFIMIIFVWIWSTIWAIGPIF) form a helical membrane-spanning segment. At 173 to 199 (GWGAYTLEGVLCNCSFDYITRDTTTRS) the chain is on the extracellular side. The chain crosses the membrane as a helical span at residues 200 to 224 (NILCMYIFAFMCPIVVIFFCYFNIV). Residues 225 to 261 (MSVSNHEKEMAAMAKRLNAKELRKAQAGANAEMKLAK) are Cytoplasmic-facing. A helical membrane pass occupies residues 262-283 (ISIVIVTQFLLSWSPYAVVALL). The Extracellular segment spans residues 284-293 (AQFGPIEWVT). The chain crosses the membrane as a helical span at residues 294–315 (PYAAQLPVMFAKASAIHNPMIY). Lys305 is subject to N6-(retinylidene)lysine. Residues 316–452 (SVSHPKFRER…QGVDNQAYQA (137 aa)) lie on the Cytoplasmic side of the membrane. Residues Cys336 and Cys337 are each lipidated (S-palmitoyl cysteine). Disordered stretches follow at residues 346 to 365 (DDKDAEAEIPAGEQSGGETA) and 376 to 452 (MMQK…AYQA). The span at 376 to 388 (MMQKMQAQQQQQP) shows a compositional bias: low complexity. Over residues 389 to 440 (AYPPQGYPPQGYPPPPPQGYPPQGYPPQGYPPQGYPPPPQGPPPQGPPPQAA) the composition is skewed to pro residues.

It belongs to the G-protein coupled receptor 1 family. Opsin subfamily. In terms of processing, contains one covalently linked retinal chromophore. Upon light absorption, the covalently bound 11-cis-retinal is converted to all-trans-retinal. After hydrolysis of the Schiff base and release of the covalently bound all-trans-retinal, active rhodopsin is regenerated by binding of a fresh molecule of 11-cis-retinal.

It is found in the cell projection. The protein localises to the rhabdomere membrane. Photoreceptor required for image-forming vision at low light intensity. Light-induced isomerization of 11-cis to all-trans retinal triggers a conformational change that activates signaling via G-proteins. Signaling mediates the activation of phospholipase C. Subsequent receptor phosphorylation mediates displacement of the bound G-protein alpha subunit by arrestin and terminates signaling. In Loligo forbesii (Veined squid), this protein is Rhodopsin (RHO).